A 37-amino-acid polypeptide reads, in one-letter code: Large ribosomal subunit protein bL36 (37 aa).

The protein belongs to the bacterial ribosomal protein bL36 family.

This chain is Large ribosomal subunit protein bL36, found in Nitratidesulfovibrio vulgaris (strain DSM 19637 / Miyazaki F) (Desulfovibrio vulgaris).